Reading from the N-terminus, the 248-residue chain is 1-(5-phosphoribosyl)-5-[(5-phosphoribosylamino)methylideneamino] imidazole-4-carboxamide isomerase (248 aa).

The active-site Proton acceptor is aspartate 8. The active-site Proton donor is the aspartate 130.

Belongs to the HisA/HisF family.

It localises to the cytoplasm. The catalysed reaction is 1-(5-phospho-beta-D-ribosyl)-5-[(5-phospho-beta-D-ribosylamino)methylideneamino]imidazole-4-carboxamide = 5-[(5-phospho-1-deoxy-D-ribulos-1-ylimino)methylamino]-1-(5-phospho-beta-D-ribosyl)imidazole-4-carboxamide. Its pathway is amino-acid biosynthesis; L-histidine biosynthesis; L-histidine from 5-phospho-alpha-D-ribose 1-diphosphate: step 4/9. The chain is 1-(5-phosphoribosyl)-5-[(5-phosphoribosylamino)methylideneamino] imidazole-4-carboxamide isomerase from Alkalilimnicola ehrlichii (strain ATCC BAA-1101 / DSM 17681 / MLHE-1).